The chain runs to 200 residues: Shikimate kinase (200 aa).

Residue 33–38 (GAGKST) participates in ATP binding. Residue Ser37 participates in Mg(2+) binding. Asp55, Arg79, and Gly101 together coordinate substrate. Arg139 is an ATP binding site. Arg158 serves as a coordination point for substrate.

Belongs to the shikimate kinase family. In terms of assembly, monomer. The cofactor is Mg(2+).

It is found in the cytoplasm. It catalyses the reaction shikimate + ATP = 3-phosphoshikimate + ADP + H(+). Its pathway is metabolic intermediate biosynthesis; chorismate biosynthesis; chorismate from D-erythrose 4-phosphate and phosphoenolpyruvate: step 5/7. In terms of biological role, catalyzes the specific phosphorylation of the 3-hydroxyl group of shikimic acid using ATP as a cosubstrate. This is Shikimate kinase from Brucella abortus (strain S19).